The sequence spans 329 residues: Malate dehydrogenase (329 aa).

Residue 12 to 18 coordinates NAD(+); it reads GAAGQIG. Substrate-binding residues include Arg-93 and Arg-99. NAD(+)-binding positions include Asn-106, Gln-113, and 130–132; that span reads TGN. Positions 132 and 163 each coordinate substrate. The Proton acceptor role is filled by His-188.

The protein belongs to the LDH/MDH superfamily. MDH type 2 family.

The catalysed reaction is (S)-malate + NAD(+) = oxaloacetate + NADH + H(+). Its function is as follows. Catalyzes the reversible oxidation of malate to oxaloacetate. The chain is Malate dehydrogenase from Mycolicibacterium paratuberculosis (strain ATCC BAA-968 / K-10) (Mycobacterium paratuberculosis).